Here is a 119-residue protein sequence, read N- to C-terminus: Holo-[acyl-carrier-protein] synthase (119 aa).

Residues Asp8 and Glu59 each coordinate Mg(2+).

This sequence belongs to the P-Pant transferase superfamily. AcpS family. The cofactor is Mg(2+).

It localises to the cytoplasm. It carries out the reaction apo-[ACP] + CoA = holo-[ACP] + adenosine 3',5'-bisphosphate + H(+). Its function is as follows. Transfers the 4'-phosphopantetheine moiety from coenzyme A to a Ser of acyl-carrier-protein. This Staphylococcus aureus (strain JH1) protein is Holo-[acyl-carrier-protein] synthase.